The following is a 504-amino-acid chain: Pentatricopeptide repeat-containing protein At5g16640, mitochondrial (504 aa).

The N-terminal 43 residues, 1–43 (MRRSISSKAKSFLHRNLLYSGNSGTSPSSSFSICGFCFSRRAY), are a transit peptide targeting the mitochondrion. PPR repeat units follow at residues 45–79 (NGSD…RPLP), 80–114 (SIAD…GIPH), 115–149 (NLCT…GHEP), 150–184 (SIVT…GYKP), 185–219 (NVVI…GIGP), 220–254 (DVVT…EIYP), 255–289 (DVFT…SLDP), 290–324 (DIVT…GCFP), 325–359 (DVVT…GVVR), 360–394 (NTVT…GVHP), 395–429 (NIIT…GMDA), 430–464 (DIVT…GLMP), and 465–499 (DIWT…GILP).

This sequence belongs to the PPR family. P subfamily.

The protein resides in the mitochondrion. The polypeptide is Pentatricopeptide repeat-containing protein At5g16640, mitochondrial (Arabidopsis thaliana (Mouse-ear cress)).